A 172-amino-acid polypeptide reads, in one-letter code: Large ribosomal subunit protein uL10 (172 aa).

This sequence belongs to the universal ribosomal protein uL10 family. As to quaternary structure, part of the ribosomal stalk of the 50S ribosomal subunit. The N-terminus interacts with L11 and the large rRNA to form the base of the stalk. The C-terminus forms an elongated spine to which L12 dimers bind in a sequential fashion forming a multimeric L10(L12)X complex.

Functionally, forms part of the ribosomal stalk, playing a central role in the interaction of the ribosome with GTP-bound translation factors. The sequence is that of Large ribosomal subunit protein uL10 from Brucella suis biovar 1 (strain 1330).